Consider the following 122-residue polypeptide: uncharacterized protein (122 aa).

Basic and acidic residues predominate over residues 1 to 15 (MAEPGGRGDYHKDGR). The interval 1–26 (MAEPGGRGDYHKDGRPPSLSRSPLFT) is disordered.

This is an uncharacterized protein from Macaca fascicularis (Crab-eating macaque).